The sequence spans 451 residues: Prenyltransferase anuH (451 aa).

Dimethylallyl diphosphate is bound by residues R105, K189, Y191, K257, Y259, and Y422.

It belongs to the tryptophan dimethylallyltransferase family.

The enzyme catalyses (8S)-annullatin E + dimethylallyl diphosphate = (8S)-annullatin J + diphosphate. The protein operates within secondary metabolite biosynthesis. Cytochrome P450 monooxygenase; part of the gene cluster that mediates the biosynthesis of annullatin D, an alkylated aromatic polyketide with a fused dihydrobenzofuran lactone ring system that exhibits potent agonistic activities toward the cannabinoid receptors. Within the pathway, anuH uses dimethylallyl diphosphate (DMAPP) to prenylate (8S)-annullatin E to produce (8S)-annullatin J. Geranyl and farnesyl diphosphate are not consumed by anuH for prenylation. 2-hydroxymethyl-3-pentylphenol, without the hydroxyl group at the side chain, is also accepted by anuH, but only with low conversion yield. The annullatin backbone 2-hydroxymethyl-3-pentylphenol is assembled from one acetyl-CoA starter unit and 5 malonyl-CoA elongation units by cooperation of the highly reducing polyketide synthase anuA, the short-chain dehydrogenase anuB and the oxidoreductase anuC, before being hydroxylated at the C-5 alkyl chain by the cytochrome P450 monooxygenase anuE to form (8S)-annullatin E. The prenyltransferase anuH subsequently installs one isoprenyl group at the benzene ring to form (8S)-annullatin J. Enzymatic or nonenzymatic dihydro-benzofuran ring formation between the prenyl and the phenolic hydroxyl groups in (8S)-annullatin J results in two diastereomers (2S,9S)-annullatin H and compound 12. The intermediate (2S,9S)-annullatin H is then converted to (2S,9S)-annullatin D by the FAD-linked oxidoreductase anuG-catalyzed five-member lactone ring formation. The isomer 12 acts as a substrate for the short-chain dehydrogenase anuF and is oxidized to (2R)-annullatin F, which is subsequently acetylated by an acetyltransferase leading to (2R)-annullatin G formation. The remaining enzymes identified within the cluster, anuD, anuI and anuJ, seem not to be involved in annullatin biosynthesis. The protein is Prenyltransferase anuH of Penicillium roqueforti (strain FM164).